A 199-amino-acid polypeptide reads, in one-letter code: MTKVLVLYYSAYGHIEAMANAVAEGAREAGVTVDIKRVPELVPAEVAKASYYKVDQAAPIAKIEDLTNYDAIIVGTGTRFGRMGSQMANFLDQAGGLWAKGALHGKVGGAFTSSATQHGGQETTLFSIITNLLHFGMVVVGMNYGFAGQMKLDEVTGGAPYGATTITGGDGSRQPSANELAGARYQGRQIAETARKLHG.

The Flavodoxin-like domain maps to 4 to 190 (VLVLYYSAYG…AGARYQGRQI (187 aa)). Residues 10-15 (SAYGHI) and 78-80 (TRF) contribute to the FMN site. Tyrosine 12 serves as a coordination point for NAD(+). Residue tryptophan 98 participates in substrate binding. FMN-binding positions include 113–119 (SSATQHG) and histidine 134.

This sequence belongs to the WrbA family. Requires FMN as cofactor.

The catalysed reaction is a quinone + NADH + H(+) = a quinol + NAD(+). It catalyses the reaction a quinone + NADPH + H(+) = a quinol + NADP(+). The protein is NAD(P)H dehydrogenase (quinone) of Bradyrhizobium diazoefficiens (strain JCM 10833 / BCRC 13528 / IAM 13628 / NBRC 14792 / USDA 110).